Consider the following 460-residue polypeptide: Inactive 7-epi-sesquithujene synthase (460 aa).

Residues D308 and D312 each coordinate Mg(2+). D308 and D312 together coordinate substrate. Residues 308-312 carry the DDXXD motif motif; sequence DDMFD.

The protein belongs to the terpene synthase family. Monomer. Mg(2+) serves as cofactor. The cofactor is Mn(2+).

The protein resides in the cytoplasm. Its pathway is secondary metabolite biosynthesis; terpenoid biosynthesis. Functionally, non-functional sesquiterpene synthase due to a frameshift removing part of the catalytic site. This chain is Inactive 7-epi-sesquithujene synthase, found in Zea mays (Maize).